The chain runs to 1105 residues: Carbamoyl phosphate synthase large chain (1105 aa).

The segment at M1–E402 is carboxyphosphate synthetic domain. ATP-binding residues include R129, R169, G175, G176, K208, V210, E215, G241, I242, H243, Q285, and E299. The ATP-grasp 1 domain maps to K133–V328. Positions 285, 299, and 301 each coordinate Mg(2+). Residues Q285, E299, and N301 each coordinate Mn(2+). Residues L403–T542 form an oligomerization domain region. Residues I543–D945 are carbamoyl phosphate synthetic domain. One can recognise an ATP-grasp 2 domain in the interval A667 to I858. The ATP site is built by R703, K742, L744, E749, G774, I775, H776, S777, Q817, and E829. Mg(2+)-binding residues include Q817, E829, and N831. Residues Q817, E829, and N831 each coordinate Mn(2+). The MGS-like domain maps to A940–T1101. The tract at residues G946–K1105 is allosteric domain.

Belongs to the CarB family. In terms of assembly, composed of two chains; the small (or glutamine) chain promotes the hydrolysis of glutamine to ammonia, which is used by the large (or ammonia) chain to synthesize carbamoyl phosphate. Tetramer of heterodimers (alpha,beta)4. The cofactor is Mg(2+). Requires Mn(2+) as cofactor.

The catalysed reaction is hydrogencarbonate + L-glutamine + 2 ATP + H2O = carbamoyl phosphate + L-glutamate + 2 ADP + phosphate + 2 H(+). The enzyme catalyses hydrogencarbonate + NH4(+) + 2 ATP = carbamoyl phosphate + 2 ADP + phosphate + 2 H(+). The protein operates within amino-acid biosynthesis; L-arginine biosynthesis; carbamoyl phosphate from bicarbonate: step 1/1. It functions in the pathway pyrimidine metabolism; UMP biosynthesis via de novo pathway; (S)-dihydroorotate from bicarbonate: step 1/3. Large subunit of the glutamine-dependent carbamoyl phosphate synthetase (CPSase). CPSase catalyzes the formation of carbamoyl phosphate from the ammonia moiety of glutamine, carbonate, and phosphate donated by ATP, constituting the first step of 2 biosynthetic pathways, one leading to arginine and/or urea and the other to pyrimidine nucleotides. The large subunit (synthetase) binds the substrates ammonia (free or transferred from glutamine from the small subunit), hydrogencarbonate and ATP and carries out an ATP-coupled ligase reaction, activating hydrogencarbonate by forming carboxy phosphate which reacts with ammonia to form carbamoyl phosphate. The polypeptide is Carbamoyl phosphate synthase large chain (Pseudothermotoga lettingae (strain ATCC BAA-301 / DSM 14385 / NBRC 107922 / TMO) (Thermotoga lettingae)).